Here is a 280-residue protein sequence, read N- to C-terminus: Probable aquaporin PIP2-8 (280 aa).

Positions M1–P21 are disordered. Transmembrane regions (helical) follow at residues A36–I56 and L70–G92. The short motif at N96 to A98 is the NPA 1 element. Helical transmembrane passes span R113–M135, S156–F176, and V192–I212. The short motif at N218 to A220 is the NPA 2 element. A helical transmembrane segment spans residues A236 to I256.

Belongs to the MIP/aquaporin (TC 1.A.8) family. PIP (TC 1.A.8.11) subfamily. Expressed in leaves and at lower levels in roots.

Its subcellular location is the cell membrane. Its function is as follows. Aquaporins facilitate the transport of water and small neutral solutes across cell membranes. The protein is Probable aquaporin PIP2-8 (PIP2-8) of Oryza sativa subsp. japonica (Rice).